The chain runs to 182 residues: Functional amyloid subunit FapB (182 aa).

Residues 1 to 18 (MTHSWLLLTVLGCSAAMA) form the signal peptide. The stretch at 22 to 58 (NQALIDNAGKQYTGVLSVNQAAGNQHQQINSRAISLG) is one FapB_R1 repeat. The FapB_R2 repeat unit spans residues 80-114 (SAAIQGSAFSNGNGILGVNQSAGANNQMINAVRIS). One copy of the FapB_R3 repeat lies at 150 to 180 (SDQAFTGSRGVVQVNQSAGVGNRMANTLGVT).

Belongs to the FapB/FapC family. Forms fibrils in vitro; in the presence of FapA the fibrils are slightly narrower. A minor component of purified amyloid fibrils. Fibrils are resistant to boiling in 2% (weight/vol) SDS and require &gt;90% (vol/vol) formic acid to dissolve.

It is found in the fimbrium. It localises to the secreted. Its function is as follows. A minor component of the functional amyloid in this bacterium. Probably nucleates fibril formation; FapB nucleates fibrillation its own, FapA inhibits FapB fibril elongation. Upon overexpression of the endogenous six-gene locus (fapA-fapF) in situ, cells form large clumps during liquid growth, make large amounts of biofilm and produce amyloid fibrils. Expression of the 6 gene operon in E.coli strain BL21(DE3) induces flocculation and biofilm formation with copious extracellular fibrils. The protein is Functional amyloid subunit FapB of Pseudomonas fluorescens.